We begin with the raw amino-acid sequence, 362 residues long: 3-dehydroquinate synthase (362 aa).

NAD(+)-binding positions include 71 to 76, 105 to 109, 129 to 130, Lys-142, Lys-151, and 169 to 172; these read DGEQYK, GVIGD, TT, and CLKT. Residues Glu-184, His-247, and His-264 each coordinate Zn(2+).

The protein belongs to the sugar phosphate cyclases superfamily. Dehydroquinate synthase family. Co(2+) is required as a cofactor. Requires Zn(2+) as cofactor. NAD(+) serves as cofactor.

It is found in the cytoplasm. It carries out the reaction 7-phospho-2-dehydro-3-deoxy-D-arabino-heptonate = 3-dehydroquinate + phosphate. It participates in metabolic intermediate biosynthesis; chorismate biosynthesis; chorismate from D-erythrose 4-phosphate and phosphoenolpyruvate: step 2/7. Its function is as follows. Catalyzes the conversion of 3-deoxy-D-arabino-heptulosonate 7-phosphate (DAHP) to dehydroquinate (DHQ). The polypeptide is 3-dehydroquinate synthase (Salmonella schwarzengrund (strain CVM19633)).